The chain runs to 37 residues: Cytochrome b6-f complex subunit 5 (37 aa).

A helical membrane pass occupies residues 5–25 (LLFGIVLGLIPVTLVGLFVAA).

It belongs to the PetG family. In terms of assembly, the 4 large subunits of the cytochrome b6-f complex are cytochrome b6, subunit IV (17 kDa polypeptide, PetD), cytochrome f and the Rieske protein, while the 4 small subunits are PetG, PetL, PetM and PetN. The complex functions as a dimer.

It localises to the plastid. The protein resides in the chloroplast thylakoid membrane. In terms of biological role, component of the cytochrome b6-f complex, which mediates electron transfer between photosystem II (PSII) and photosystem I (PSI), cyclic electron flow around PSI, and state transitions. PetG is required for either the stability or assembly of the cytochrome b6-f complex. This is Cytochrome b6-f complex subunit 5 from Rhodomonas salina (Cryptomonas salina).